The chain runs to 340 residues: tRNA N6-adenosine threonylcarbamoyltransferase (340 aa).

Residues His-113 and His-117 each contribute to the Fe cation site. Residues 135–139 (LVSGG), Asp-169, Gly-182, Asp-186, and Asn-274 each bind substrate. Asp-302 is a Fe cation binding site.

The protein belongs to the KAE1 / TsaD family. Fe(2+) is required as a cofactor.

It localises to the cytoplasm. The catalysed reaction is L-threonylcarbamoyladenylate + adenosine(37) in tRNA = N(6)-L-threonylcarbamoyladenosine(37) in tRNA + AMP + H(+). Required for the formation of a threonylcarbamoyl group on adenosine at position 37 (t(6)A37) in tRNAs that read codons beginning with adenine. Is involved in the transfer of the threonylcarbamoyl moiety of threonylcarbamoyl-AMP (TC-AMP) to the N6 group of A37, together with TsaE and TsaB. TsaD likely plays a direct catalytic role in this reaction. This Mycobacterium sp. (strain KMS) protein is tRNA N6-adenosine threonylcarbamoyltransferase.